We begin with the raw amino-acid sequence, 288 residues long: Transmembrane and coiled-coil domain-containing protein 5A (288 aa).

The stretch at 10–189 (KKNIISLNMD…ELETGYLERE (180 aa)) forms a coiled coil. A helical membrane pass occupies residues 227 to 249 (SLLFSTLFFIRLLGYLIFHLSFI).

The protein belongs to the TMCO5 family. As to expression, only detected in testis (at protein level).

The protein localises to the endoplasmic reticulum membrane. Its subcellular location is the nucleus membrane. The sequence is that of Transmembrane and coiled-coil domain-containing protein 5A (Tmco5a) from Mus musculus (Mouse).